We begin with the raw amino-acid sequence, 269 residues long: MATTYDWSQRKIMVPEKEEIALSTNDLRVFYNGTKEAIHGVTMSFPKNEITALIGPSGSGKSTYLRALNRMNDTIDGARVTGEINYEGVNINENKVNVFEVRKQIGMVFQRPNPFPKSIYENIAFIHRRDGVRDRKKLDEIVETSLKQAALWDQVKDNLNQSALAMSGGQAQRLCIARALSVKPEIILMDEPASALDPISTMQIEETMMELKENYTIIIVTHNMAQASRASDNTAFFYSGDLIEYDKTSTIFTQPSLQSTEDYVSGHFG.

The ABC transporter domain maps to 22–264 (LSTNDLRVFY…PSLQSTEDYV (243 aa)). ATP is bound at residue 55-62 (GPSGSGKS).

It belongs to the ABC transporter superfamily. Phosphate importer (TC 3.A.1.7) family. In terms of assembly, the complex is composed of two ATP-binding proteins (PstB), two transmembrane proteins (PstC and PstA) and a solute-binding protein (PstS).

It localises to the cell membrane. It catalyses the reaction phosphate(out) + ATP + H2O = ADP + 2 phosphate(in) + H(+). Functionally, part of the ABC transporter complex PstSACB involved in phosphate import. Responsible for energy coupling to the transport system. In Lactococcus lactis subsp. lactis (strain IL1403) (Streptococcus lactis), this protein is Phosphate import ATP-binding protein PstB 2.